The sequence spans 520 residues: UvrABC system protein C (520 aa).

The GIY-YIG domain occupies 11–89 (EEPGCYQFKD…IKKYQPKYNI (79 aa)). The region spanning 195–230 (QDLIYDLRKEMETFAAAEEYEKALVIRDRIAAIENL) is the UVR domain.

It belongs to the UvrC family. Interacts with UvrB in an incision complex.

It is found in the cytoplasm. The UvrABC repair system catalyzes the recognition and processing of DNA lesions. UvrC both incises the 5' and 3' sides of the lesion. The N-terminal half is responsible for the 3' incision and the C-terminal half is responsible for the 5' incision. The chain is UvrABC system protein C from Methanospirillum hungatei JF-1 (strain ATCC 27890 / DSM 864 / NBRC 100397 / JF-1).